Consider the following 327-residue polypeptide: Germination protease (327 aa).

The propeptide occupies 1 to 7; that stretch reads MNSVRTD.

Belongs to the peptidase A25 family. In terms of assembly, homotetramer. Autoproteolytically processed. The inactive tetrameric zymogen termed p46 autoprocesses to a smaller form termed p41, which is active only during spore germination.

It carries out the reaction Endopeptidase action with P4 Glu or Asp, P1 preferably Glu &gt; Asp, P1' hydrophobic and P2' Ala.. Functionally, initiates the rapid degradation of small, acid-soluble proteins during spore germination. The protein is Germination protease of Clostridium acetobutylicum (strain ATCC 824 / DSM 792 / JCM 1419 / IAM 19013 / LMG 5710 / NBRC 13948 / NRRL B-527 / VKM B-1787 / 2291 / W).